Here is a 522-residue protein sequence, read N- to C-terminus: Maturase K (522 aa).

It belongs to the intron maturase 2 family. MatK subfamily.

The protein localises to the plastid. Its subcellular location is the chloroplast. In terms of biological role, usually encoded in the trnK tRNA gene intron. Probably assists in splicing its own and other chloroplast group II introns. The polypeptide is Maturase K (Aristea glauca).